We begin with the raw amino-acid sequence, 525 residues long: NGFI-A-binding protein 2 (525 aa).

A disordered region spans residues 1 to 31; it reads MHRAPSPTAEQPPGRGDNTRRTPQPRFKASA. At S6 the chain carries Phosphoserine. The interval 35-113 is NCD1; it reads ALPRTLGELQ…REWATNPGLF (79 aa). The tract at residues 135–238 is disordered; the sequence is GTRKGSMSNG…GAGGGPDRLE (104 aa). 4 positions are modified to phosphoserine: S157, S159, S162, and S171. The segment covering 212 to 234 has biased composition (gly residues); it reads AGGGVSEGPGVGGVAAGGAGGGP. The segment at 267–356 is NCD2; sequence LLKLNKKLAR…SRQVARESTY (90 aa). The interval 353 to 384 is necessary for nuclear localization; that stretch reads ESTYLSSLKGSRLHSEELGGPPLKKLKQEVGE. Residue K379 forms a Glycyl lysine isopeptide (Lys-Gly) (interchain with G-Cter in SUMO1) linkage. Positions 381–416 are disordered; sequence EVGEQSHNEIQQPPPGPESYAPPYRPSLEEDSASLS. S479 is modified (phosphoserine). The tract at residues 501-525 is disordered; the sequence is APGPHPALVEGRRSSVKVEAEASRQ. Over residues 510 to 525 the composition is skewed to basic and acidic residues; sequence EGRRSSVKVEAEASRQ. K517 participates in a covalent cross-link: Glycyl lysine isopeptide (Lys-Gly) (interchain with G-Cter in SUMO1); alternate. K517 is covalently cross-linked (Glycyl lysine isopeptide (Lys-Gly) (interchain with G-Cter in SUMO2); alternate).

This sequence belongs to the NAB family. As to quaternary structure, homomultimers may associate with EGR1 bound to DNA. Sumoylation by EGR2 represses EGR2 transcriptional activity in hindbrain. As to expression, highly expressed in brain and thymus, and at lower levels in spleen, kidney, heart and testis. Isoform 1 is predominantly expressed in testis, whereas isoform 3 is more abundant in thymus.

It localises to the nucleus. Functionally, acts as a transcriptional repressor for zinc finger transcription factors EGR1 and EGR2. Isoform 2 lacks repression ability. The chain is NGFI-A-binding protein 2 (Nab2) from Mus musculus (Mouse).